The following is a 119-amino-acid chain: Large ribosomal subunit protein bL20 (119 aa).

Belongs to the bacterial ribosomal protein bL20 family.

Binds directly to 23S ribosomal RNA and is necessary for the in vitro assembly process of the 50S ribosomal subunit. It is not involved in the protein synthesizing functions of that subunit. The sequence is that of Large ribosomal subunit protein bL20 from Streptococcus agalactiae serotype Ia (strain ATCC 27591 / A909 / CDC SS700).